A 353-amino-acid chain; its full sequence is 11-beta-hydroxysteroid dehydrogenase B (353 aa).

The chain crosses the membrane as a helical; Signal-anchor for type II membrane protein span at residues 10-30; sequence LFVPPASLITLAFSWPALCFP. The Proline-knob signature appears at 13-26; that stretch reads PPASLITLAFSWPA. Residues 54–80 and aspartate 105 each bind NADP(+); that span reads GASS…VARR. Serine 184 contacts substrate. Tyrosine 197 functions as the Proton acceptor in the catalytic mechanism. Residues 197–201 and lysine 201 each bind NADP(+); that span reads YAAAK.

Belongs to the short-chain dehydrogenases/reductases (SDR) family. Expressed in seeds (at protein level).

It is found in the lipid droplet. The protein resides in the membrane. The catalysed reaction is an 11beta-hydroxysteroid + NADP(+) = an 11-oxosteroid + NADPH + H(+). In terms of biological role, has dehydrogenase activity against 11 beta-hydroxysteroid and 17 beta-hydroxysteroid. May be involved in signal transduction regulated by various sterols. In Arachis hypogaea (Peanut), this protein is 11-beta-hydroxysteroid dehydrogenase B.